Reading from the N-terminus, the 253-residue chain is tRNA pseudouridine synthase A (253 aa).

Aspartate 53 (nucleophile) is an active-site residue. Residue tyrosine 112 coordinates substrate.

The protein belongs to the tRNA pseudouridine synthase TruA family. As to quaternary structure, homodimer.

The catalysed reaction is uridine(38/39/40) in tRNA = pseudouridine(38/39/40) in tRNA. Its function is as follows. Formation of pseudouridine at positions 38, 39 and 40 in the anticodon stem and loop of transfer RNAs. This Lactococcus lactis subsp. cremoris (strain MG1363) protein is tRNA pseudouridine synthase A.